Consider the following 114-residue polypeptide: NADH-quinone oxidoreductase subunit K 2 (114 aa).

The next 3 membrane-spanning stretches (helical) occupy residues 1-21 (MIVP…LGVF), 29-49 (LIMI…AFIG), and 62-82 (FVLF…AIIV).

This sequence belongs to the complex I subunit 4L family. As to quaternary structure, NDH-1 is composed of 14 different subunits. Subunits NuoA, H, J, K, L, M, N constitute the membrane sector of the complex.

It is found in the cell inner membrane. The enzyme catalyses a quinone + NADH + 5 H(+)(in) = a quinol + NAD(+) + 4 H(+)(out). Its function is as follows. NDH-1 shuttles electrons from NADH, via FMN and iron-sulfur (Fe-S) centers, to quinones in the respiratory chain. The immediate electron acceptor for the enzyme in this species is believed to be ubiquinone. Couples the redox reaction to proton translocation (for every two electrons transferred, four hydrogen ions are translocated across the cytoplasmic membrane), and thus conserves the redox energy in a proton gradient. This chain is NADH-quinone oxidoreductase subunit K 2, found in Syntrophobacter fumaroxidans (strain DSM 10017 / MPOB).